A 167-amino-acid chain; its full sequence is Ribosome maturation factor RimM (167 aa).

The 75-residue stretch at 92–166 (DDEFYHTDLI…RIVADPPEGL (75 aa)) folds into the PRC barrel domain.

It belongs to the RimM family. In terms of assembly, binds ribosomal protein uS19.

Its subcellular location is the cytoplasm. In terms of biological role, an accessory protein needed during the final step in the assembly of 30S ribosomal subunit, possibly for assembly of the head region. Essential for efficient processing of 16S rRNA. May be needed both before and after RbfA during the maturation of 16S rRNA. It has affinity for free ribosomal 30S subunits but not for 70S ribosomes. This Ruegeria pomeroyi (strain ATCC 700808 / DSM 15171 / DSS-3) (Silicibacter pomeroyi) protein is Ribosome maturation factor RimM.